We begin with the raw amino-acid sequence, 219 residues long: Mediator of RNA polymerase II transcription subunit 20 (219 aa).

The protein belongs to the Mediator complex subunit 20 family. Component of the Mediator complex.

It localises to the nucleus. In terms of biological role, component of the Mediator complex, a coactivator involved in the regulated transcription of nearly all RNA polymerase II-dependent genes. Mediator functions as a bridge to convey information from gene-specific regulatory proteins to the basal RNA polymerase II transcription machinery. Mediator is recruited to promoters by direct interactions with regulatory proteins and serves as a scaffold for the assembly of a functional preinitiation complex with RNA polymerase II and the general transcription factors. The protein is Mediator of RNA polymerase II transcription subunit 20 (MED20) of Aedes aegypti (Yellowfever mosquito).